The following is a 463-amino-acid chain: Abscisic acid 8'-hydroxylase 3 (463 aa).

A helical membrane pass occupies residues 6-26 (LFLTLSAAALFLCLLRFIAGV). Cysteine 411 contributes to the heme binding site.

The protein belongs to the cytochrome P450 family. Heme serves as cofactor. Mainly expressed in flower buds, flowers, rosette leaves and roots. Lower expression in mature siliques and inflorescence stems. Not expressed in dry seeds.

It is found in the membrane. The enzyme catalyses 2-cis-(+)-abscisate + reduced [NADPH--hemoprotein reductase] + O2 = (+)-8'-hydroxyabscisate + oxidized [NADPH--hemoprotein reductase] + H2O + H(+). It functions in the pathway plant hormone degradation; abscisic acid degradation. With respect to regulation, inhibited by tetcyclcis, but not by metyrapone. Its function is as follows. Involved in the oxidative degradation of abscisic acid, but not in the isomerization of the produced 8'-hydroxyabscisic acid (8'-OH-ABA) to (-)-phaseic acid (PA). Involved in the control of postgermination growth. The sequence is that of Abscisic acid 8'-hydroxylase 3 (CYP707A3) from Arabidopsis thaliana (Mouse-ear cress).